An 81-amino-acid chain; its full sequence is Cytochrome c oxidase subunit 7B2, mitochondrial (81 aa).

The transit peptide at 1–25 (MMFPLARNALSSLKIRSILQSMARQ) directs the protein to the mitochondrion. The Mitochondrial matrix portion of the chain corresponds to 26–33 (SHVKHSPD). A helical membrane pass occupies residues 34 to 60 (FHDKYGNAVLASGTAFCVVAWVFTATQ). Topologically, residues 61–81 (IGIEWNLSPVGRVTPKEWKHQ) are mitochondrial intermembrane.

It belongs to the cytochrome c oxidase VIIb family. In terms of assembly, component of the cytochrome c oxidase (complex IV, CIV), a multisubunit enzyme composed of 14 subunits. The complex is composed of a catalytic core of 3 subunits MT-CO1, MT-CO2 and MT-CO3, encoded in the mitochondrial DNA, and 11 supernumerary subunits COX4I, COX5A, COX5B, COX6A, COX6B, COX6C, COX7A, COX7B, COX7C, COX8 and NDUFA4, which are encoded in the nuclear genome. The complex exists as a monomer or a dimer and forms supercomplexes (SCs) in the inner mitochondrial membrane with NADH-ubiquinone oxidoreductase (complex I, CI) and ubiquinol-cytochrome c oxidoreductase (cytochrome b-c1 complex, complex III, CIII), resulting in different assemblies (supercomplex SCI(1)III(2)IV(1) and megacomplex MCI(2)III(2)IV(2)).

It localises to the mitochondrion inner membrane. Its pathway is energy metabolism; oxidative phosphorylation. In terms of biological role, component of the cytochrome c oxidase, the last enzyme in the mitochondrial electron transport chain which drives oxidative phosphorylation. The respiratory chain contains 3 multisubunit complexes succinate dehydrogenase (complex II, CII), ubiquinol-cytochrome c oxidoreductase (cytochrome b-c1 complex, complex III, CIII) and cytochrome c oxidase (complex IV, CIV), that cooperate to transfer electrons derived from NADH and succinate to molecular oxygen, creating an electrochemical gradient over the inner membrane that drives transmembrane transport and the ATP synthase. Cytochrome c oxidase is the component of the respiratory chain that catalyzes the reduction of oxygen to water. Electrons originating from reduced cytochrome c in the intermembrane space (IMS) are transferred via the dinuclear copper A center (CU(A)) of subunit 2 and heme A of subunit 1 to the active site in subunit 1, a binuclear center (BNC) formed by heme A3 and copper B (CU(B)). The BNC reduces molecular oxygen to 2 water molecules using 4 electrons from cytochrome c in the IMS and 4 protons from the mitochondrial matrix. This is Cytochrome c oxidase subunit 7B2, mitochondrial (COX7B2) from Macaca fascicularis (Crab-eating macaque).